A 110-amino-acid chain; its full sequence is Large ribosomal subunit protein uL22 (110 aa).

The protein belongs to the universal ribosomal protein uL22 family. As to quaternary structure, part of the 50S ribosomal subunit.

In terms of biological role, this protein binds specifically to 23S rRNA; its binding is stimulated by other ribosomal proteins, e.g. L4, L17, and L20. It is important during the early stages of 50S assembly. It makes multiple contacts with different domains of the 23S rRNA in the assembled 50S subunit and ribosome. Its function is as follows. The globular domain of the protein is located near the polypeptide exit tunnel on the outside of the subunit, while an extended beta-hairpin is found that lines the wall of the exit tunnel in the center of the 70S ribosome. The sequence is that of Large ribosomal subunit protein uL22 from Mannheimia succiniciproducens (strain KCTC 0769BP / MBEL55E).